A 360-amino-acid chain; its full sequence is Flavin-dependent trigonelline monooxygenase, oxygenase component (360 aa).

Belongs to the bacterial luciferase oxidoreductase family. In terms of assembly, homodimer. The trigonelline monooxygenase is composed of a reductase component TgnA and an oxygenase component TgnB.

It catalyses the reaction N-methylnicotinate + FMNH2 + O2 = (Z)-2-((N-methylformamido)methylene)-5-hydroxybutanolactone + FMN + H(+). The catalysed reaction is N-methylnicotinate + FADH2 + O2 = (Z)-2-((N-methylformamido)methylene)-5-hydroxybutanolactone + FAD + H(+). In terms of biological role, involved in the degradation of the pyridine ring of trigonelline (TG; N-methylnicotinate) into succinate and methylamine as carbon and nitrogen sources, respectively. Catalyzes the insertion of two oxygens, followed by a ring cleavage of trigonelline to yield (Z)-2-((N-methylformamido)methylene)-5-hydroxybutyrolactone (MFMB). It is able to use reduced FMN or FAD. The protein is Flavin-dependent trigonelline monooxygenase, oxygenase component of Acinetobacter baylyi (strain ATCC 33305 / BD413 / ADP1).